A 1160-amino-acid chain; its full sequence is Major DNA-binding protein (1160 aa).

The short motif at F808–W809 is the Required for filament formation element. The segment at A1139 to L1160 is required for nuclear localization.

Belongs to the herpesviridae major DNA-binding protein family. As to quaternary structure, homooligomers. Forms double-helical filaments necessary for the formation of replication compartments within the host nucleus. Interacts with the origin-binding protein. Interacts with the helicase primase complex; this interaction stimulates primer synthesis activity of the helicase-primase complex. Interacts with the DNA polymerase. Interacts with the alkaline exonuclease; this interaction increases its nuclease processivity.

The protein localises to the host nucleus. Functionally, single-stranded DNA-binding protein required for DNA replication. Plays several crucial roles in viral infection. Participates in the opening of the viral DNA origin to initiate replication by interacting with the origin-binding protein. May disrupt loops, hairpins and other secondary structures present on ssDNA to reduce and eliminate pausing of viral DNA polymerase at specific sites during elongation. Promotes viral DNA recombination by performing strand-transfer, characterized by the ability to transfer a DNA strand from a linear duplex to a complementary single-stranded DNA circle. Can also catalyze the renaturation of complementary single strands. Additionally, reorganizes the host cell nucleus, leading to the formation of prereplicative sites and replication compartments. This process is driven by the protein which can form double-helical filaments in the absence of DNA. The chain is Major DNA-binding protein from Simian cytomegalovirus (strain Colburn).